We begin with the raw amino-acid sequence, 40 residues long: MVIAAMLVPFVAIRSHDMTTYLYWTAVTAAYLTYLTIKRW.

A helical membrane pass occupies residues 20-37 (TYLYWTAVTAAYLTYLTI).

It is found in the membrane. This is an uncharacterized protein from Archaeoglobus fulgidus (strain ATCC 49558 / DSM 4304 / JCM 9628 / NBRC 100126 / VC-16).